Reading from the N-terminus, the 140-residue chain is Large ribosomal subunit protein uL16 (140 aa).

The segment covering 1 to 16 has biased composition (basic residues); that stretch reads MLMPKRVKHRKQMKGR. The tract at residues 1–20 is disordered; sequence MLMPKRVKHRKQMKGRMKGD.

It belongs to the universal ribosomal protein uL16 family. Part of the 50S ribosomal subunit.

Binds 23S rRNA and is also seen to make contacts with the A and possibly P site tRNAs. In Geobacter sulfurreducens (strain ATCC 51573 / DSM 12127 / PCA), this protein is Large ribosomal subunit protein uL16.